We begin with the raw amino-acid sequence, 414 residues long: Ankyrin repeat domain-containing protein 10 (414 aa).

5 ANK repeats span residues 18–47 (TLRF…RSDL), 54–83 (YGWT…SVNA), 88–117 (FAQT…NINK), 121–150 (VGET…QIDL), and 154–187 (SGLT…RYYS). The segment at 310 to 332 (GVTSPSRHRIHTSNGTEEPEKAM) is disordered.

The sequence is that of Ankyrin repeat domain-containing protein 10 (ANKRD10) from Gallus gallus (Chicken).